The chain runs to 183 residues: Ion-translocating oxidoreductase complex subunit B (183 aa).

The hydrophobic stretch occupies residues Met1–Ala23. A 4Fe-4S domain is found at Glu29–Arg88. [4Fe-4S] cluster is bound by residues Cys46, Cys49, Cys54, Cys71, Cys113, Cys116, Cys119, Cys123, Cys143, Cys146, Cys149, and Cys153. 4Fe-4S ferredoxin-type domains are found at residues Ala104 to Lys133 and Met135 to Val163.

This sequence belongs to the 4Fe4S bacterial-type ferredoxin family. RnfB subfamily. The complex is composed of six subunits: RnfA, RnfB, RnfC, RnfD, RnfE and RnfG. The cofactor is [4Fe-4S] cluster.

Its subcellular location is the cell inner membrane. Functionally, part of a membrane-bound complex that couples electron transfer with translocation of ions across the membrane. This Azoarcus sp. (strain BH72) protein is Ion-translocating oxidoreductase complex subunit B.